The primary structure comprises 494 residues: 2,3-bisphosphoglycerate-independent phosphoglycerate mutase (494 aa).

Mn(2+)-binding residues include Asp12 and Ser62. Ser62 (phosphoserine intermediate) is an active-site residue. Residues His121, Arg150–Asp151, Arg181, Arg187, Arg252–Arg255, and Lys317 contribute to the substrate site. 5 residues coordinate Mn(2+): Asp384, His388, Asp425, His426, and His443.

It belongs to the BPG-independent phosphoglycerate mutase family. Monomer. Requires Mn(2+) as cofactor.

It catalyses the reaction (2R)-2-phosphoglycerate = (2R)-3-phosphoglycerate. The protein operates within carbohydrate degradation; glycolysis; pyruvate from D-glyceraldehyde 3-phosphate: step 3/5. Catalyzes the interconversion of 2-phosphoglycerate and 3-phosphoglycerate. The protein is 2,3-bisphosphoglycerate-independent phosphoglycerate mutase of Anaplasma marginale (strain St. Maries).